A 2998-amino-acid chain; its full sequence is Probable polyketide synthase 14 (2998 aa).

In terms of domain architecture, Ketosynthase family 3 (KS3) spans 19 to 456 (EDDIAIIGIG…GSNCCLILSE (438 aa)). Catalysis depends on for beta-ketoacyl synthase activity residues cysteine 189, histidine 331, and histidine 376. The tract at residues 657–690 (GIEASFIVGHSLGEIPAAYCSGMITLDTLCYLIY) is acyl/malonyl transferase. The active-site For acyl/malonyl transferase activity is the serine 667. Positions 962 to 1084 (IDQLGFSLIE…GNFQLFTSGN (123 aa)) are N-terminal hotdog fold. The 288-residue stretch at 962–1249 (IDQLGFSLIE…CKSLTIIKDS (288 aa)) folds into the PKS/mFAS DH domain. The active-site Proton acceptor; for dehydratase activity is histidine 996. The interval 1101–1249 (NLTKLTKNEL…CKSLTIIKDS (149 aa)) is C-terminal hotdog fold. Aspartate 1159 acts as the Proton donor; for dehydratase activity in catalysis. A helical transmembrane segment spans residues 1979–1999 (SILIHSGSGGIGLSALNILKW). One can recognise a Carrier domain in the interval 2476 to 2553 (ENDTSIDSLF…SSIKLITNQL (78 aa)). An O-(pantetheine 4'-phosphoryl)serine modification is found at serine 2513. The segment at 2559 to 2578 (DGQQQQHRQNKKNNNIPENK) is disordered. Residues 2561-2573 (QQQQHRQNKKNNN) are compositionally biased toward low complexity. The helical transmembrane segment at 2621-2641 (IFLTGSTGFLGAYLLWYLIQM) threads the bilayer.

The cofactor is pantetheine 4'-phosphate.

The protein resides in the membrane. In terms of biological role, probable polyketide synthase. The chain is Probable polyketide synthase 14 (pks14) from Dictyostelium discoideum (Social amoeba).